We begin with the raw amino-acid sequence, 1154 residues long: FERM domain-containing protein A (1154 aa).

Disordered stretches follow at residues 122 to 149 (NNNS…SSSS), 432 to 468 (NLSS…NHHN), 715 to 734 (NKNN…SSSS), 771 to 794 (SNSN…TSSS), and 961 to 980 (TNGS…NNGI). FERM domains follow at residues 218-547 (PLHQ…PSIQ) and 666-1103 (REIV…QTKL). A compositionally biased stretch (gly residues) spans 437–447 (GGSGNGSGSGN). Over residues 448-463 (GSSSSSSNSSSGNNNN) the composition is skewed to low complexity.

Functionally, key regulator of adhesion dynamics, it acts as an anti-adhesive. Plays a critical role in the regulation of cell-cell adhesion, multi-cellular development and, in particular, the formation of the organising center known as the tip. Required for turnover of paxillin-adhesion sites during cell migration. Plays a major role in normal cell shape, cell-substrate adhesion and actin cytoskeleton organization. This is FERM domain-containing protein A (frmA) from Dictyostelium discoideum (Social amoeba).